The following is a 294-amino-acid chain: AKTDIPVNIYKPKNPYIGKCLSNEELVREGGTGTVRHLIFDISGGDLRYLEGQSIGIIPPGTDNNGKPHKLRLYSIASTRHGDHVDDKTVSLCVRQLEYKHPETGETVYGVCSTYLCNLEAGADVAITGPVGKEMLLPEDEDATIIMMATGTGIAPFRAFLWRIFKEQHEDYKFKGLAWLFFGIPYSPNILYQQELEELQEEFPENFRLTLAISREQQNPEGGKMYIQDRIKENADQLWELIQKPNTHTYICGLKGMEGGIDEGMSAAAGKFDVDWSDYQKELKKKHRWHVETY.

The FAD-binding FR-type domain occupies 13-137; it reads KNPYIGKCLS…TGPVGKEMLL (125 aa). FAD is bound by residues 72-75, 93-95, tyrosine 99, 111-113, and threonine 152; these read RLYS, CVR, and VCS. Positions 75 and 95 each coordinate NADP(+). NADP(+) is bound by residues threonine 152, 184 to 185, 214 to 215, lysine 224, 224 to 228, 253 to 254, and glutamate 292; these read IP, SR, KMYIQ, and GL.

Belongs to the ferredoxin--NADP reductase type 1 family. FAD is required as a cofactor.

It is found in the cellular thylakoid membrane. It catalyses the reaction 2 reduced [2Fe-2S]-[ferredoxin] + NADP(+) + H(+) = 2 oxidized [2Fe-2S]-[ferredoxin] + NADPH. The protein is Ferredoxin--NADP reductase (petH) of Spirulina sp.